We begin with the raw amino-acid sequence, 135 residues long: Succinate dehydrogenase assembly factor 2, mitochondrial (135 aa).

This sequence belongs to the SDHAF2 family. Interacts with the flavoprotein subunit within the SDH catalytic dimer.

Its subcellular location is the mitochondrion matrix. Its function is as follows. Plays an essential role in the assembly of succinate dehydrogenase (SDH), an enzyme complex (also referred to as respiratory complex II) that is a component of both the tricarboxylic acid (TCA) cycle and the mitochondrial electron transport chain, and which couples the oxidation of succinate to fumarate with the reduction of ubiquinone (coenzyme Q) to ubiquinol. Required for flavinylation (covalent attachment of FAD) of the flavoprotein subunit of the SDH catalytic dimer. This is Succinate dehydrogenase assembly factor 2, mitochondrial from Meyerozyma guilliermondii (strain ATCC 6260 / CBS 566 / DSM 6381 / JCM 1539 / NBRC 10279 / NRRL Y-324) (Yeast).